The chain runs to 694 residues: uncharacterized protein (694 aa).

The stretch at His15–Lys51 forms a coiled coil. Disordered regions lie at residues Leu259–Tyr286, Gln461–Asp490, and Asn643–Thr680. 2 stretches are compositionally biased toward polar residues: residues Ser272–Glu283 and Asp476–Asp490. A compositionally biased stretch (low complexity) spans Ser663–Arg677.

This is an uncharacterized protein from Homo sapiens (Human).